Consider the following 118-residue polypeptide: Cytochrome b-c1 complex subunit 7 (118 aa).

Positions 1–32 (MVHLTKTLRFINNPGFRKFYYGLQGYNKYGLY) are igE-binding. Immunodominant epitope; induces specific IgE antibody production in mice. Causes degranulation of rat basophilic leukemia (RBL) cells and the release of beta-hexosaminidase from them.

The protein belongs to the UQCRB/QCR7 family. Component of the ubiquinol-cytochrome c oxidoreductase (cytochrome b-c1 complex, complex III, CIII), a multisubunit enzyme composed of 3 respiratory subunits cytochrome b, cytochrome c1 and Rieske protein, 2 core protein subunits, and additional low-molecular weight protein subunits. The complex exists as an obligatory dimer and forms supercomplexes (SCs) in the inner mitochondrial membrane with cytochrome c oxidase (complex IV, CIV).

It is found in the mitochondrion inner membrane. Its function is as follows. Component of the ubiquinol-cytochrome c oxidoreductase, a multisubunit transmembrane complex that is part of the mitochondrial electron transport chain which drives oxidative phosphorylation. The respiratory chain contains 3 multisubunit complexes succinate dehydrogenase (complex II, CII), ubiquinol-cytochrome c oxidoreductase (cytochrome b-c1 complex, complex III, CIII) and cytochrome c oxidase (complex IV, CIV), that cooperate to transfer electrons derived from NADH and succinate to molecular oxygen, creating an electrochemical gradient over the inner membrane that drives transmembrane transport and the ATP synthase. The cytochrome b-c1 complex catalyzes electron transfer from ubiquinol to cytochrome c, linking this redox reaction to translocation of protons across the mitochondrial inner membrane, with protons being carried across the membrane as hydrogens on the quinol. In the process called Q cycle, 2 protons are consumed from the matrix, 4 protons are released into the intermembrane space and 2 electrons are passed to cytochrome c. The polypeptide is Cytochrome b-c1 complex subunit 7 (Dermatophagoides farinae (American house dust mite)).